Reading from the N-terminus, the 926-residue chain is DNA mismatch repair protein MutS (926 aa).

Residues 1-60 are disordered; sequence MAASQNPIQGSLFGGNEESDLNKAEKLKGSERSNVNLSHQQLKEDASLRPRIKQTPKNPN. The span at 20 to 31 shows a compositional bias: basic and acidic residues; that stretch reads DLNKAEKLKGSE. 726–733 contributes to the ATP binding site; that stretch reads GPNASGKS.

The protein belongs to the DNA mismatch repair MutS family.

Functionally, this protein is involved in the repair of mismatches in DNA. It is possible that it carries out the mismatch recognition step. This protein has a weak ATPase activity. This Prochlorococcus marinus (strain NATL2A) protein is DNA mismatch repair protein MutS.